Here is a 419-residue protein sequence, read N- to C-terminus: DNA primase DnaG (419 aa).

In terms of domain architecture, Toprim spans 168–244; it reads DTIIVVEGRS…KVDYVARAPE (77 aa). The Mg(2+) site is built by Glu-174, Asp-218, and Asp-220. Composition is skewed to basic and acidic residues over residues 280-291 and 306-316; these read KPAEEAVKREEE and KAAKPPEEKPP. Residues 280–317 form a disordered region; the sequence is KPAEEAVKREEEAAAEAKPPAPAVQEKAAKPPEEKPPT.

The protein belongs to the archaeal DnaG primase family. In terms of assembly, forms a ternary complex with MCM helicase and DNA. Component of the archaeal exosome complex. It depends on Mg(2+) as a cofactor.

It catalyses the reaction ssDNA + n NTP = ssDNA/pppN(pN)n-1 hybrid + (n-1) diphosphate.. In terms of biological role, RNA polymerase that catalyzes the synthesis of short RNA molecules used as primers for DNA polymerase during DNA replication. Also part of the exosome, which is a complex involved in RNA degradation. Acts as a poly(A)-binding protein that enhances the interaction between heteromeric, adenine-rich transcripts and the exosome. The protein is DNA primase DnaG of Aeropyrum pernix (strain ATCC 700893 / DSM 11879 / JCM 9820 / NBRC 100138 / K1).